An 81-amino-acid polypeptide reads, in one-letter code: RNA-binding protein Hfq (81 aa).

Positions 10-70 (DLFLNSVRKS…ISTIMPSQPV (61 aa)) constitute a Sm domain.

This sequence belongs to the Hfq family. In terms of assembly, homohexamer.

Functionally, RNA chaperone that binds small regulatory RNA (sRNAs) and mRNAs to facilitate mRNA translational regulation in response to envelope stress, environmental stress and changes in metabolite concentrations. Also binds with high specificity to tRNAs. This Mesorhizobium japonicum (strain LMG 29417 / CECT 9101 / MAFF 303099) (Mesorhizobium loti (strain MAFF 303099)) protein is RNA-binding protein Hfq.